Here is a 139-residue protein sequence, read N- to C-terminus: MLSPKKTKFRKQHRGRMKGSASKGNTIAFGDYALQATEPVWLTSRQIEATRRTITRYVRRGGKLWIRVFPDKPVTARPAETRMGSGKGAPEYWVAVIKPGHILFEITGVPQKTAQQAMKLASYKLPIKTKFIVRNTTES.

Basic residues predominate over residues Met-1–Met-17. The tract at residues Met-1–Lys-23 is disordered.

Belongs to the universal ribosomal protein uL16 family. Part of the 50S ribosomal subunit.

The protein localises to the plastid. Its subcellular location is the chloroplast. The sequence is that of Large ribosomal subunit protein uL16c from Pyropia yezoensis (Susabi-nori).